A 289-amino-acid chain; its full sequence is Pyridoxal kinase PdxY (289 aa).

Substrate contacts are provided by residues S9 and 44-45; that span reads TQ. Residues D112, V144, E149, and K182 each coordinate ATP. Substrate is bound at residue D221.

This sequence belongs to the pyridoxine kinase family. PdxY subfamily. In terms of assembly, homodimer. Mg(2+) serves as cofactor.

The catalysed reaction is pyridoxal + ATP = pyridoxal 5'-phosphate + ADP + H(+). It functions in the pathway cofactor metabolism; pyridoxal 5'-phosphate salvage; pyridoxal 5'-phosphate from pyridoxal: step 1/1. In terms of biological role, pyridoxal kinase involved in the salvage pathway of pyridoxal 5'-phosphate (PLP). Catalyzes the phosphorylation of pyridoxal to PLP. In Vibrio parahaemolyticus serotype O3:K6 (strain RIMD 2210633), this protein is Pyridoxal kinase PdxY.